The sequence spans 1358 residues: MSSSRYILIPPEDLHPLTSNTGNEQNIYPDFDPWAHTEIEDKILLSFVAKGHYTSAKVNFESISARSSLQESLPKVAGMLAEQFSKVVHLREQTINKVSGESEESIRGKAKFTDLAGPGFSLPNRVTLTDQRRTQWLQELSSPNVSLSKLAKSIPHGFKRKQILEQCYMRQLPLQRAIWLIKSSYSIEWKSLTSKLKPGQTNEGVVSQLYNLWTNSMVSIMERLLFEMPKYYNDTAQAKIWKPRVSYYINLLGNCYNMGLMDRGVFNHWLVEFVEKVENFEFLPLSLHLLNIFWSGICPPTHGIEAPDNSFLISKITVVLLHKHHMILQNKSMINDENYIINDLQRNARLKESLLLRLKAFILDIFHHQSLEAFIMPNQNWDLYKNCLYEIVTMDKTSNEQAMVIKRKLELITYRNDSLQFNLLKQYKMKSSSLYESDGVEIDNLCDMQSILNVPFLDPEMTKILDNATPGYDWTLFVQQRFTCIEKVAQMIMWATNPSRKARYDGAHLVAKLLLLKTTSQENLPDYNMEDMIWKLVFHFSKLSERELSNIVELPSLYELLNIFIGYGIIKVPTYIRKLISSGIMYISDSKDKFFHCELLINLKISPLMKNQYNMMLKNIMEYDATYYVRYNYEQLQIQLNTAKEQMLQEQFEHISCLPISVKIWVSEWYLSYVCSPVDNVLKPVDKGTVIKNFTIFGLYLKEIFHFYKWVEFIVYHQLLADINALSALIDVLLYYENLFPLLINDQILFMKTLIHIYSKGLKNKDNLSYNITEFNPFWKFFMKHFPYLVEIDSDLQLQLGEVYESEKIRIEKLTKSSVDVITLYCNINQVNEESFKFGTHNFPGIFQQNLKILLKTESADACERARKGLSLLMLANLGDYTKFMSIFLKRKDYTIEQLVKLISVKLLTLDQIQKIIGDDILREILSRNNYGEGLWYELHKRNFIKKNFKIVLSMYRNSTSLDDRKLFLDLLVFYGPNSRLQEQVTTIICNCLRESNEDYSLILSLLRYGTKNIDQGTQETINIAKLYENLNFTNLWIFQAFTNYYTEALFNGATSDGQTITNFVFELIDLTRYNVLCSHLFDRVANFDVLEKLLEVFEADFFKKCLSEDPDDVHFLAVMIETIMNLSRKMNQSSAVISMNNESFRLLQATMLKFTSMNKTALCNSEMKLSIYLKIFIVHQKFIFQKVCDSLRQDRYDAEADLVKSLRLLFENTGFKLKLRLLLYDILSSLKSFVIYECTKKSESKRETRKLQISEALQNLPPFHISSFLDDMSISAHGDFDFLGLTEQPTPAEPEEGSQFFLYNKRTREYECGLNIEPFQLLPNHQSREPGSSCHFFNDTALSLSLFDARFDKKNPT.

The stretch at 629–654 (VRYNYEQLQIQLNTAKEQMLQEQFEH) forms a coiled coil.

It belongs to the Mediator complex subunit 12 family. In terms of assembly, component of the SRB8-11 complex, which itself associates with the Mediator complex.

The protein localises to the nucleus. In terms of biological role, component of the SRB8-11 complex. The SRB8-11 complex is a regulatory module of the Mediator complex which is itself involved in regulation of basal and activated RNA polymerase II-dependent transcription. The SRB8-11 complex may be involved in the transcriptional repression of a subset of genes regulated by Mediator. It may inhibit the association of the Mediator complex with RNA polymerase II to form the holoenzyme complex. The chain is Mediator of RNA polymerase II transcription subunit 12 (SRB8) from Eremothecium gossypii (strain ATCC 10895 / CBS 109.51 / FGSC 9923 / NRRL Y-1056) (Yeast).